The sequence spans 454 residues: Peroxisome assembly protein 10 (454 aa).

At 1–23 (MATQPPPARPPPPLTSSPYPYAA) the chain is on the peroxisomal matrix side. A helical membrane pass occupies residues 24–53 (APDIIRAHQKDAYFQGVLANRLSDLHRRLR). A topological domain (cytoplasmic) is located at residue Gly54. Residues 55–76 (ARSAHAWAAETRTFAAALYLCL) traverse the membrane as a helical segment. Topologically, residues 77 to 132 (TTLLGNRTLGEEYCDLVQVEEAPSKLFASSSSKAADDHIYENGLGGGGDGGPLLPS) are peroxisomal matrix. A helical transmembrane segment spans residues 133 to 165 (LPRRAGYILTAIVLPHLASRALPSVRSAIRKRL). The Cytoplasmic segment spans residues 166–201 (QSRLATLSRRRQQTGTKSGSGRGGRGGGGGITEYRV). Positions 171 to 194 (TLSRRRQQTGTKSGSGRGGRGGGG) are disordered. Gly residues predominate over residues 183–194 (SGSGRGGRGGGG). A helical transmembrane segment spans residues 202–229 (LRYLLTHLTPLTSGAHFRAATLAVFYFT). At 230 to 276 (GAYYELSKWVWGLRYVFTTRAGRVVDDDHNRHHHSPQHGGGNGGRAG) the chain is on the peroxisomal matrix side. Residues 277–296 (YEVLGVLLVVQMAVRAWLHV) form a helical membrane-spanning segment. Topologically, residues 297–454 (REQLSSGSVA…VQHILPLRAA (158 aa)) are cytoplasmic. The interval 302-329 (SGSVAGGGGEEEEDGEDGFRERTAFGPG) is disordered. The Zn(2+) site is built by Cys402, Cys405, Cys417, His419, Cys422, Cys425, Cys436, and Cys439. Residues 402–440 (CTLCLEELKDPAATQCGHVFCWACIGDWVREKPECPLCR) form an RING-type zinc finger.

Belongs to the pex2/pex10/pex12 family. As to quaternary structure, component of the PEX2-PEX10-PEX12 retrotranslocation channel, composed of PEX2, PEX10 and PEX12.

It is found in the peroxisome membrane. The enzyme catalyses S-ubiquitinyl-[E2 ubiquitin-conjugating enzyme]-L-cysteine + [acceptor protein]-L-lysine = [E2 ubiquitin-conjugating enzyme]-L-cysteine + N(6)-ubiquitinyl-[acceptor protein]-L-lysine.. The protein operates within protein modification; protein ubiquitination. With respect to regulation, the E3 ubiquitin-protein ligase activity is stimulated by PEX12. In terms of biological role, E3 ubiquitin-protein ligase component of a retrotranslocation channel required for peroxisome organization by mediating export of the PEX5 receptor from peroxisomes to the cytosol, thereby promoting PEX5 recycling. The retrotranslocation channel is composed of PEX2, PEX10 and PEX12; each subunit contributing transmembrane segments that coassemble into an open channel that specifically allows the passage of PEX5 through the peroxisomal membrane. PEX10 also regulates PEX5 recycling by acting as a E3 ubiquitin-protein ligase. When PEX5 recycling is compromised, PEX10 catalyzes polyubiquitination of PEX5 during its passage through the retrotranslocation channel, leading to its degradation. This chain is Peroxisome assembly protein 10, found in Thermothelomyces thermophilus (strain ATCC 42464 / BCRC 31852 / DSM 1799) (Sporotrichum thermophile).